Reading from the N-terminus, the 292-residue chain is Type II methyltransferase M.SmaI (292 aa).

The tract at residues 110 to 130 (WRDKDDKNKGRAMSYRPPTPE) is disordered.

This sequence belongs to the N(4)/N(6)-methyltransferase family. N(4) subfamily.

It carries out the reaction a 2'-deoxycytidine in DNA + S-adenosyl-L-methionine = an N(4)-methyl-2'-deoxycytidine in DNA + S-adenosyl-L-homocysteine + H(+). Functionally, a beta subtype methylase thatnrecognizes the double-stranded sequence 5'-CCCGGG-3', methylates C-2 on both strands, and protects the DNA from cleavage by the SmaI endonuclease. This Serratia marcescens protein is Type II methyltransferase M.SmaI (smaIM).